The primary structure comprises 873 residues: MKTMTTAEIRRAFLNYFSENGHKIVHSASLVPGNDPTLLFTNAGMVPFKELFIGTETRDYRRATSAQRCVRAGGKHNDLENVGYTARHHTFFEMLGNFSFGDYFKAEAIPFAWRFLTEVLQLPAEKLLVTVYHEDDEAYRIWQEKIGLPADRIIRIGDKAGKAKYESDNFWAMGDTGPCGPCTEIFYDHGAEIFGGRPGSADEDGDRFIEIWNIVFMQFERDAEGTMKPLPKPSIDTGMGLERIAAVMQGVHSNYDIDLFIHLIDAAAKAVGCKNEGQASLKVIADHIRATVFLMVDGVLPSNEGRGYVLRRIMRRAIRHGYKLGQQGLFFHKLVAALVAEMGEAYPEIIAEQARITETIRKEELRFAQTLTAGMQILEQDLATLKGTIISGETVFKLYDTYGFPVDLTNDIARERGLTLDEAGYEALMQAQRERAKASGTFRADKTYTVSGKTAFLAYQQEQTESTIEAIFVQEQAADTLDCGDEAVLVLNQSPFYGESGGQIGDSGVIYHQNGAFLVSDTQKQGDVLLHFGRLQRGVLSVGDTVCAEIDRARRAAIRRHHSATHLLHQALRMTLGTHVQQKGSLVDADKLRFDFSHDAALTAAEIGAVEQLINEQILRNQPVNISEMPYDQACAQGAMALFGEKYGDIVRVVKMGADDFSVELCGGTHVKQTGDLGLVKIIAQSAVAAGIRRVECVAGLAALRYCQQQETQLQRIAAVLKSDLEHSVEKIERLQQDTKTLEKTVQQLKRTVALGGTQETAESVVDIHGWKTMAVRRDDLDNAILRDTADQLRDKYQLDVVVIGSSDGEMARLVVSVAKSAAALKAGAIVQTLAAFIDGKGGGRPDFAQAGGKNIQGLDAALAALPQALPQK.

Zn(2+)-binding residues include His-562, His-566, Cys-666, and His-670.

It belongs to the class-II aminoacyl-tRNA synthetase family. It depends on Zn(2+) as a cofactor.

It localises to the cytoplasm. It catalyses the reaction tRNA(Ala) + L-alanine + ATP = L-alanyl-tRNA(Ala) + AMP + diphosphate. In terms of biological role, catalyzes the attachment of alanine to tRNA(Ala) in a two-step reaction: alanine is first activated by ATP to form Ala-AMP and then transferred to the acceptor end of tRNA(Ala). Also edits incorrectly charged Ser-tRNA(Ala) and Gly-tRNA(Ala) via its editing domain. This chain is Alanine--tRNA ligase, found in Dichelobacter nodosus (strain VCS1703A).